Consider the following 163-residue polypeptide: Nucleotide-binding protein Dde_2479 (163 aa).

The protein belongs to the YajQ family.

Nucleotide-binding protein. The protein is Nucleotide-binding protein Dde_2479 of Oleidesulfovibrio alaskensis (strain ATCC BAA-1058 / DSM 17464 / G20) (Desulfovibrio alaskensis).